Consider the following 271-residue polypeptide: Secretagogin (271 aa).

EF-hand domains are found at residues 8–43 (LDAA…LLKK), 53–88 (KVQG…EDEN), 100–135 (DNSV…LFLQ), 144–179 (KLDE…QENF), 192–227 (ERKS…MMEL), and 235–271 (VDLD…KANP). D21, D23, N25, Y27, and E32 together coordinate Ca(2+). Residues D113, D115, S117, E124, N159, D161, R163, D168, D205, S207, T209, E216, D249, N251, D253, K255, and E260 each contribute to the Ca(2+) site.

It is found in the cytoplasm. This Xenopus laevis (African clawed frog) protein is Secretagogin (scgn).